The primary structure comprises 317 residues: uncharacterized protein (317 aa).

Basic and acidic residues predominate over residues 1–11; the sequence is MASAGAERRPG. The segment at 1-164 is disordered; it reads MASAGAERRP…KAKKRKSLGA (164 aa). Residues 19 to 34 show a composition bias toward polar residues; it reads GQGQLTEEPGSAQTSE. 2 stretches are compositionally biased toward basic and acidic residues: residues 47-58 and 71-92; these read HEARGTQSEDQR and EGPK…ERGP. 2 stretches are compositionally biased toward basic residues: residues 100-110 and 151-161; these read RPRHGPKRKPV and KQHKKAKKRKS.

This is an uncharacterized protein from Homo sapiens (Human).